Reading from the N-terminus, the 251-residue chain is Putative imidazole glycerol phosphate synthase subunit hisF2 (251 aa).

The active site involves D130.

The protein belongs to the HisA/HisF family. As to quaternary structure, heterodimer of HisH and HisF.

It localises to the cytoplasm. The enzyme catalyses 5-[(5-phospho-1-deoxy-D-ribulos-1-ylimino)methylamino]-1-(5-phospho-beta-D-ribosyl)imidazole-4-carboxamide + L-glutamine = D-erythro-1-(imidazol-4-yl)glycerol 3-phosphate + 5-amino-1-(5-phospho-beta-D-ribosyl)imidazole-4-carboxamide + L-glutamate + H(+). Its pathway is amino-acid biosynthesis; L-histidine biosynthesis; L-histidine from 5-phospho-alpha-D-ribose 1-diphosphate: step 5/9. IGPS catalyzes the conversion of PRFAR and glutamine to IGP, AICAR and glutamate. The HisF subunit catalyzes the cyclization activity that produces IGP and AICAR from PRFAR using the ammonia provided by the HisH subunit. This Pseudomonas aeruginosa (strain ATCC 15692 / DSM 22644 / CIP 104116 / JCM 14847 / LMG 12228 / 1C / PRS 101 / PAO1) protein is Putative imidazole glycerol phosphate synthase subunit hisF2 (hisF2).